Consider the following 610-residue polypeptide: Phosphomethylpyrimidine synthase (610 aa).

Substrate is bound by residues N216, M245, Y274, H310, 330-332, 371-374, and E410; these read SRG and DGLR. H414 contacts Zn(2+). Y437 contributes to the substrate binding site. H478 provides a ligand contact to Zn(2+). [4Fe-4S] cluster is bound by residues C558, C561, and C566.

The protein belongs to the ThiC family. In terms of assembly, homodimer. [4Fe-4S] cluster is required as a cofactor.

It catalyses the reaction 5-amino-1-(5-phospho-beta-D-ribosyl)imidazole + S-adenosyl-L-methionine = 4-amino-2-methyl-5-(phosphooxymethyl)pyrimidine + CO + 5'-deoxyadenosine + formate + L-methionine + 3 H(+). Its pathway is cofactor biosynthesis; thiamine diphosphate biosynthesis. Its function is as follows. Catalyzes the synthesis of the hydroxymethylpyrimidine phosphate (HMP-P) moiety of thiamine from aminoimidazole ribotide (AIR) in a radical S-adenosyl-L-methionine (SAM)-dependent reaction. The chain is Phosphomethylpyrimidine synthase from Allorhizobium ampelinum (strain ATCC BAA-846 / DSM 112012 / S4) (Agrobacterium vitis (strain S4)).